The primary structure comprises 399 residues: Forkhead box protein A4-A (399 aa).

The segment at residues 119–213 is a DNA-binding region (fork-head); it reads KPPYSYISLI…ENGCYLRRQK (95 aa). Residues 219–234 show a composition bias toward basic and acidic residues; it reads RSKSGEGEKKVNKPGE. The tract at residues 219–290 is disordered; the sequence is RSKSGEGEKK…VGLSPTSEQA (72 aa). The span at 267-277 shows a compositional bias: polar residues; it reads STGSSIHQACG.

As to expression, during stages 8.5 to 10, expressed in the part of the dorsal mesoderm invaginating the dorsal blastopore lip (Spemann organizer), as a direct response to dorsal mesodermal induction. At stage 12 (mid-gastrulation), restricted to the dorsal midline in the deeper layers of mesodermal cells. Continuously present in the posterior portion of invaginated mesoderm and expressed within the notochord. Also present in the midline of the neural plate during gastrulation, but absent from the notoplate in exogastrula embryos. Expression in the notochord continues in neurula-stage embryos and at stage 20 in addition to the notochord, expression is seen in the pharyngeal endoderm.

Its subcellular location is the nucleus. Its function is as follows. Transcriptional repressor involved in embryonic nervous system development. Plays a role in the induction and patterning of the anterior-posterior neural axis. Involved in the establishment of floor plate differentiation from neural plate cells during gastrulation. Binds the anf1 promoter sequence to restrict expression of anf1 to the anterior of the neural plate, thereby patterning the forebrain. Can bind to the HNF-3-alpha DNA target sequence. Cooperates with t/bra in a dose-dependent manner to specify dorsal mesoderm formation, including notochord. Binds to DNA via the target sequence 5'-[GA]TAAA[TC]A-3', with 5'-GTAAATA-3' being the preferred binding site. This is Forkhead box protein A4-A (foxa4-a) from Xenopus laevis (African clawed frog).